The primary structure comprises 178 residues: Large ribosomal subunit protein uL6 (178 aa).

It belongs to the universal ribosomal protein uL6 family. In terms of assembly, part of the 50S ribosomal subunit.

Functionally, this protein binds to the 23S rRNA, and is important in its secondary structure. It is located near the subunit interface in the base of the L7/L12 stalk, and near the tRNA binding site of the peptidyltransferase center. In Nautilia profundicola (strain ATCC BAA-1463 / DSM 18972 / AmH), this protein is Large ribosomal subunit protein uL6.